Reading from the N-terminus, the 229-residue chain is Protein ras-2 (229 aa).

Residue 15–22 coordinates GTP; sequence GDGGVGKT. An Effector region motif is present at residues 37 to 45; sequence YDPTIEDSY. 62-66 contacts GTP; that stretch reads DTAGQ. The interval 109–132 is disordered; sequence KESTSSPSAYPGSSPLAATNPSAP. Low complexity predominate over residues 111 to 126; that stretch reads STSSPSAYPGSSPLAA. Position 140–143 (140–143) interacts with GTP; it reads NKSD. The disordered stretch occupies residues 188–229; that stretch reads LRKQRQQGQSTPRALPPSGNSKSEKYSGTEKPKRPRGKCLII. Residues 209–219 show a composition bias toward basic and acidic residues; the sequence is KSEKYSGTEKP. Positions 220–229 are enriched in basic residues; that stretch reads KRPRGKCLII. Residue Cys226 is modified to Cysteine methyl ester. Cys226 is lipidated: S-farnesyl cysteine. A propeptide spans 227-229 (removed in mature form); sequence LII.

The protein belongs to the small GTPase superfamily. Ras family.

The protein resides in the cell membrane. The enzyme catalyses GTP + H2O = GDP + phosphate + H(+). Functionally, ras proteins bind GDP/GTP and possess intrinsic GTPase activity. This is Protein ras-2 (ras-2) from Neurospora crassa (strain ATCC 24698 / 74-OR23-1A / CBS 708.71 / DSM 1257 / FGSC 987).